We begin with the raw amino-acid sequence, 218 residues long: Large ribosomal subunit protein uL3 (218 aa).

Belongs to the universal ribosomal protein uL3 family. As to quaternary structure, part of the 50S ribosomal subunit. Forms a cluster with proteins L14 and L19.

Its function is as follows. One of the primary rRNA binding proteins, it binds directly near the 3'-end of the 23S rRNA, where it nucleates assembly of the 50S subunit. The chain is Large ribosomal subunit protein uL3 from Brachyspira pilosicoli (Serpulina pilosicoli).